The chain runs to 429 residues: Histidine--tRNA ligase (429 aa).

Belongs to the class-II aminoacyl-tRNA synthetase family. Homodimer.

It is found in the cytoplasm. The catalysed reaction is tRNA(His) + L-histidine + ATP = L-histidyl-tRNA(His) + AMP + diphosphate + H(+). The protein is Histidine--tRNA ligase of Pseudomonas aeruginosa (strain UCBPP-PA14).